A 238-amino-acid polypeptide reads, in one-letter code: Ribosomal RNA small subunit methyltransferase G (238 aa).

S-adenosyl-L-methionine contacts are provided by residues Gly79, Phe84, 102–104, 130–131, and Arg149; these read EAT and IE.

Belongs to the methyltransferase superfamily. RNA methyltransferase RsmG family.

It is found in the cytoplasm. Its function is as follows. Specifically methylates the N7 position of a guanine in 16S rRNA. In Chloroflexus aggregans (strain MD-66 / DSM 9485), this protein is Ribosomal RNA small subunit methyltransferase G.